The chain runs to 188 residues: Guanylate kinase (188 aa).

The Guanylate kinase-like domain maps to 2–183 (TKLIIISAPS…CVEQIRKAIA (182 aa)). Position 9–16 (9–16 (APSGTGKS)) interacts with ATP.

The protein belongs to the guanylate kinase family.

Its subcellular location is the cytoplasm. It carries out the reaction GMP + ATP = GDP + ADP. In terms of biological role, essential for recycling GMP and indirectly, cGMP. The protein is Guanylate kinase of Porphyromonas gingivalis (strain ATCC BAA-308 / W83).